The chain runs to 622 residues: Putative DEAD-box ATP-dependent RNA helicase 44 (622 aa).

The segment at 50–97 is disordered; sequence DRRSIVQISRSNSDNDDGNRPRDVKRERHRSHDHDRNRESDREFRERE. Residues 66–97 are compositionally biased toward basic and acidic residues; sequence DGNRPRDVKRERHRSHDHDRNRESDREFRERE. The Helicase ATP-binding domain occupies 241–436; it reads IPLGLEQRDV…RKFLRNPVVV (196 aa). ATP is bound at residue 254-261; it reads SATGSGKT. The short motif at 367-370 is the DEAD box element; sequence DEAD. Residues 460–606 enclose the Helicase C-terminal domain; that stretch reads RLKKLIDDLG…LVPPELARHE (147 aa).

It belongs to the DEAD box helicase family. DDX23/PRP28 subfamily.

It catalyses the reaction ATP + H2O = ADP + phosphate + H(+). This is Putative DEAD-box ATP-dependent RNA helicase 44 (RH44) from Arabidopsis thaliana (Mouse-ear cress).